The chain runs to 1092 residues: Extended synaptotagmin-1 (1092 aa).

N-acetylmethionine is present on Met-1. Over 1 to 28 (MEHSPEEGASPEPSGQPPATDSTRDGGS) the chain is Cytoplasmic. The disordered stretch occupies residues 1–36 (MEHSPEEGASPEPSGQPPATDSTRDGGSGVPPAGPG). Residues 29 to 49 (GVPPAGPGAASEALAVLTSFG) traverse the membrane as a helical segment. At 50–52 (RRL) the chain is on the lumenal side. A helical membrane pass occupies residues 53-73 (LVLVPVYLAGAAGLSVGFVLF). Over 74–1092 (GLALYLGWRR…LMDDRDKGGS (1019 aa)) the chain is Cytoplasmic. The SMP-LTD domain maps to 125–303 (DVEKAEWLNK…LPNRLLVPLV (179 aa)). C2 domains follow at residues 302–423 (LVPD…DNWY), 444–570 (DAEK…QLSS), 616–738 (DAPP…DEWL), and 769–886 (QVNS…ALSG). A Phosphoserine; by CDK5 modification is found at Ser-314. Ca(2+) is bound by residues Lys-334, Asp-335, Asp-347, Asp-394, Asp-396, Asp-398, Asp-400, and Asp-401. Residues 604–628 (WDRESLETGSSVDAPPRPYHTTPNS) form a disordered region. At Lys-804 the chain carries N6-acetyllysine. A Phosphoserine modification is found at Ser-807. The interval 909–937 (HSHSYSHSHSSSSLNDEPEALGGPTHPAS) is disordered. Residues 911–921 (HSYSHSHSSSS) show a composition bias toward low complexity. A phosphoserine mark is found at Ser-937 and Ser-951. Residues 959 to 1081 (PLGQVKLTVW…DLSQGAAQWY (123 aa)) form the C2 5 domain. Tyr-997 is subject to Phosphotyrosine. Positions 1006 to 1013 (KNRSTKRK) are required for phosphatidylinositol 4,5-bisphosphate-dependent location at the cell membrane.

It belongs to the extended synaptotagmin family. Interacts with ESYT2 and ESYT3. Interacts with ADGRD1; inhibiting the G-protein-coupled receptor activity of ADGRD1. Interaction with ADGRD1 is abolished when cytosolic calcium increases, relieving ADGRD1 G-protein-coupled receptor activity. Interacts (phosphorylated form) with SLC2A4. Post-translationally, phosphorylated on Ser residues in insulin-treated adipocytes (in vitro); this promotes interaction with SLC2A4.

Its subcellular location is the endoplasmic reticulum membrane. The protein localises to the cell membrane. In terms of biological role, binds calcium (via the C2 domains) and translocates to sites of contact between the endoplasmic reticulum and the cell membrane in response to increased cytosolic calcium levels. Helps tether the endoplasmic reticulum to the cell membrane and promotes the formation of appositions between the endoplasmic reticulum and the cell membrane. Acts as an inhibitor of ADGRD1 G-protein-coupled receptor activity in absence of cytosolic calcium. Binds glycerophospholipids in a barrel-like domain and may play a role in cellular lipid transport. In Mus musculus (Mouse), this protein is Extended synaptotagmin-1 (Esyt1).